We begin with the raw amino-acid sequence, 438 residues long: Transmembrane protease serine 11F (438 aa).

The Cytoplasmic portion of the chain corresponds to 1-32; sequence MMYAPVEFSEAEFSRAEYQRKQQFWDSVRLAL. A helical; Signal-anchor for type II membrane protein transmembrane segment spans residues 33 to 53; sequence FTLAIVAIIGIAIGIVTHFVV. At 54–438 the chain is on the extracellular side; that stretch reads EDDKSFYYLA…RDWIASKTGM (385 aa). The 119-residue stretch at 57 to 175 folds into the SEA domain; the sequence is KSFYYLASFK…PSFRLTPIDS (119 aa). A Peptidase S1 domain is found at 206 to 437; it reads IVQGRETAME…YRDWIASKTG (232 aa). A disulfide bridge connects residues cysteine 233 and cysteine 249. Residues histidine 248 and aspartate 293 each act as charge relay system in the active site. Intrachain disulfides connect cysteine 358/cysteine 374 and cysteine 385/cysteine 413. Serine 389 (charge relay system) is an active-site residue.

Belongs to the peptidase S1 family.

The protein localises to the membrane. Functionally, probable serine protease. The polypeptide is Transmembrane protease serine 11F (TMPRSS11F) (Homo sapiens (Human)).